We begin with the raw amino-acid sequence, 338 residues long: Holliday junction branch migration complex subunit RuvB (338 aa).

The segment covering 1–14 has biased composition (basic and acidic residues); the sequence is MENDHGILSDHPSG. The interval 1-21 is disordered; that stretch reads MENDHGILSDHPSGEEESQVE. The segment at 3–185 is large ATPase domain (RuvB-L); that stretch reads NDHGILSDHP…FGIVEHMNYY (183 aa). Residues Leu24, Arg25, Gly66, Lys69, Thr70, Thr71, 132 to 134, Arg175, Tyr185, and Arg222 each bind ATP; that span reads EDY. Thr70 contacts Mg(2+). The tract at residues 186 to 256 is small ATPAse domain (RuvB-S); the sequence is TQDELTKIIF…IVKQALSLLQ (71 aa). The tract at residues 259 to 338 is head domain (RuvB-H); sequence DRGLDEIDRK…LGIEYPTDKN (80 aa). DNA-binding residues include Arg314 and Arg319.

It belongs to the RuvB family. As to quaternary structure, homohexamer. Forms an RuvA(8)-RuvB(12)-Holliday junction (HJ) complex. HJ DNA is sandwiched between 2 RuvA tetramers; dsDNA enters through RuvA and exits via RuvB. An RuvB hexamer assembles on each DNA strand where it exits the tetramer. Each RuvB hexamer is contacted by two RuvA subunits (via domain III) on 2 adjacent RuvB subunits; this complex drives branch migration. In the full resolvosome a probable DNA-RuvA(4)-RuvB(12)-RuvC(2) complex forms which resolves the HJ.

The protein localises to the cytoplasm. The catalysed reaction is ATP + H2O = ADP + phosphate + H(+). Its function is as follows. The RuvA-RuvB-RuvC complex processes Holliday junction (HJ) DNA during genetic recombination and DNA repair, while the RuvA-RuvB complex plays an important role in the rescue of blocked DNA replication forks via replication fork reversal (RFR). RuvA specifically binds to HJ cruciform DNA, conferring on it an open structure. The RuvB hexamer acts as an ATP-dependent pump, pulling dsDNA into and through the RuvAB complex. RuvB forms 2 homohexamers on either side of HJ DNA bound by 1 or 2 RuvA tetramers; 4 subunits per hexamer contact DNA at a time. Coordinated motions by a converter formed by DNA-disengaged RuvB subunits stimulates ATP hydrolysis and nucleotide exchange. Immobilization of the converter enables RuvB to convert the ATP-contained energy into a lever motion, pulling 2 nucleotides of DNA out of the RuvA tetramer per ATP hydrolyzed, thus driving DNA branch migration. The RuvB motors rotate together with the DNA substrate, which together with the progressing nucleotide cycle form the mechanistic basis for DNA recombination by continuous HJ branch migration. Branch migration allows RuvC to scan DNA until it finds its consensus sequence, where it cleaves and resolves cruciform DNA. The polypeptide is Holliday junction branch migration complex subunit RuvB (Limosilactobacillus reuteri (strain DSM 20016) (Lactobacillus reuteri)).